The following is a 35-amino-acid chain: Photosystem II reaction center protein T (35 aa).

The chain crosses the membrane as a helical span at residues 3 to 23 (ALVYTFLLVSTLGIIFFAIFF).

It belongs to the PsbT family. As to quaternary structure, PSII is composed of 1 copy each of membrane proteins PsbA, PsbB, PsbC, PsbD, PsbE, PsbF, PsbH, PsbI, PsbJ, PsbK, PsbL, PsbM, PsbT, PsbY, PsbZ, Psb30/Ycf12, at least 3 peripheral proteins of the oxygen-evolving complex and a large number of cofactors. It forms dimeric complexes.

The protein localises to the plastid. The protein resides in the chloroplast thylakoid membrane. In terms of biological role, found at the monomer-monomer interface of the photosystem II (PS II) dimer, plays a role in assembly and dimerization of PSII. PSII is a light-driven water plastoquinone oxidoreductase, using light energy to abstract electrons from H(2)O, generating a proton gradient subsequently used for ATP formation. This is Photosystem II reaction center protein T from Schisandra chinensis (Chinese magnolia vine).